The chain runs to 176 residues: Large ribosomal subunit protein eL20 (176 aa).

Lysine 11 participates in a covalent cross-link: Glycyl lysine isopeptide (Lys-Gly) (interchain with G-Cter in SUMO2). A Phosphotyrosine modification is found at tyrosine 63. Serine 71 bears the Phosphoserine mark. At lysine 76 the chain carries N6-succinyllysine. Serine 123 carries the post-translational modification Phosphoserine. Glycyl lysine isopeptide (Lys-Gly) (interchain with G-Cter in SUMO2) cross-links involve residues lysine 128 and lysine 170.

This sequence belongs to the eukaryotic ribosomal protein eL20 family. As to quaternary structure, component of the large ribosomal subunit. Binds IPO9 with high affinity.

The protein localises to the cytoplasm. Its function is as follows. Component of the large ribosomal subunit. The ribosome is a large ribonucleoprotein complex responsible for the synthesis of proteins in the cell. The polypeptide is Large ribosomal subunit protein eL20 (RPL18A) (Oryctolagus cuniculus (Rabbit)).